Consider the following 564-residue polypeptide: Putative zinc metalloproteinase in scaA 5'region (564 aa).

Residues 1-564 (MTRLQDDFYD…KEADFSAEEF (564 aa)) form the Peptidase M13 domain. Histidine 478 contributes to the Zn(2+) binding site. Glutamate 479 is an active-site residue. Zn(2+) is bound by residues histidine 482 and glutamate 538. The active-site Proton donor is aspartate 542.

It belongs to the peptidase M13 family. Zn(2+) is required as a cofactor.

In Streptococcus gordonii (strain Challis / ATCC 35105 / BCRC 15272 / CH1 / DL1 / V288), this protein is Putative zinc metalloproteinase in scaA 5'region.